A 212-amino-acid polypeptide reads, in one-letter code: Uracil phosphoribosyltransferase (212 aa).

5-phospho-alpha-D-ribose 1-diphosphate-binding positions include Arg-78, Arg-103, and 130–138; that span reads DPMLATGSS. Uracil contacts are provided by residues Ile-193 and 198–200; that span reads GDA. Position 199 (Asp-199) interacts with 5-phospho-alpha-D-ribose 1-diphosphate.

Belongs to the UPRTase family. The cofactor is Mg(2+).

It carries out the reaction UMP + diphosphate = 5-phospho-alpha-D-ribose 1-diphosphate + uracil. It functions in the pathway pyrimidine metabolism; UMP biosynthesis via salvage pathway; UMP from uracil: step 1/1. Its activity is regulated as follows. Allosterically activated by GTP. Catalyzes the conversion of uracil and 5-phospho-alpha-D-ribose 1-diphosphate (PRPP) to UMP and diphosphate. The protein is Uracil phosphoribosyltransferase of Pseudomonas syringae pv. tomato (strain ATCC BAA-871 / DC3000).